Consider the following 206-residue polypeptide: Large ribosomal subunit protein uL4 (206 aa).

A disordered region spans residues asparagine 47–aspartate 94. Residues alanine 49–lysine 58 are compositionally biased toward basic and acidic residues. Residues serine 59–alanine 74 are compositionally biased toward basic residues.

Belongs to the universal ribosomal protein uL4 family. As to quaternary structure, part of the 50S ribosomal subunit.

One of the primary rRNA binding proteins, this protein initially binds near the 5'-end of the 23S rRNA. It is important during the early stages of 50S assembly. It makes multiple contacts with different domains of the 23S rRNA in the assembled 50S subunit and ribosome. Functionally, forms part of the polypeptide exit tunnel. The chain is Large ribosomal subunit protein uL4 from Laribacter hongkongensis (strain HLHK9).